We begin with the raw amino-acid sequence, 167 residues long: Putative defense protein Hdd11-like (167 aa).

The signal sequence occupies residues 1–18 (MMFTYVVAVASVVALTSA). The Reelin domain maps to 19–167 (YPTGAPPSAC…ESAPVKVLSH (149 aa)). A disulfide bridge links C28 with C105.

The protein belongs to the insect defense protein family. As to expression, in larvae, high expression in the fat body and low expression in midgut, hemocytes and malpighian tubules. No expression in silkgland.

Its subcellular location is the secreted. In terms of biological role, may have antimicrobial activity. The sequence is that of Putative defense protein Hdd11-like from Samia ricini (Indian eri silkmoth).